A 445-amino-acid polypeptide reads, in one-letter code: Glycine--tRNA ligase (445 aa).

Substrate-binding residues include R97 and E145. ATP contacts are provided by residues 177 to 179 (RNE), 187 to 192 (FRTCEF), 262 to 263 (EI), and 308 to 311 (GLTR). 192 to 196 (FEQME) provides a ligand contact to substrate. Substrate is bound at residue 304 to 308 (ETSAG).

The protein belongs to the class-II aminoacyl-tRNA synthetase family. In terms of assembly, homodimer.

Its subcellular location is the cytoplasm. The catalysed reaction is tRNA(Gly) + glycine + ATP = glycyl-tRNA(Gly) + AMP + diphosphate. Catalyzes the attachment of glycine to tRNA(Gly). The sequence is that of Glycine--tRNA ligase from Borreliella afzelii (strain PKo) (Borrelia afzelii).